Consider the following 165-residue polypeptide: Ribosome maturation factor RimM (165 aa).

Residues 94-165 (EDEFYIADLT…YVILNYQREA (72 aa)) enclose the PRC barrel domain.

Belongs to the RimM family. As to quaternary structure, binds ribosomal protein uS19.

The protein localises to the cytoplasm. An accessory protein needed during the final step in the assembly of 30S ribosomal subunit, possibly for assembly of the head region. Essential for efficient processing of 16S rRNA. May be needed both before and after RbfA during the maturation of 16S rRNA. It has affinity for free ribosomal 30S subunits but not for 70S ribosomes. The protein is Ribosome maturation factor RimM of Rickettsia conorii (strain ATCC VR-613 / Malish 7).